Consider the following 310-residue polypeptide: N-acetyl-gamma-glutamyl-phosphate reductase (310 aa).

Cys117 is an active-site residue.

The protein belongs to the NAGSA dehydrogenase family. Type 2 subfamily.

The protein resides in the cytoplasm. It carries out the reaction N-acetyl-L-glutamate 5-semialdehyde + phosphate + NADP(+) = N-acetyl-L-glutamyl 5-phosphate + NADPH + H(+). It participates in amino-acid biosynthesis; L-arginine biosynthesis; N(2)-acetyl-L-ornithine from L-glutamate: step 3/4. Functionally, catalyzes the NADPH-dependent reduction of N-acetyl-5-glutamyl phosphate to yield N-acetyl-L-glutamate 5-semialdehyde. This is N-acetyl-gamma-glutamyl-phosphate reductase from Rhizobium meliloti (strain 1021) (Ensifer meliloti).